The sequence spans 411 residues: Keratin, type I cytoskeletal 12 (411 aa).

Residues Asp1–Ser42 form a head region. Positions Glu43–Trp78 are coil 1A. The 317-residue stretch at Glu43–Asp359 folds into the IF rod domain. The segment at Gly83 to Leu101 is linker 1. The interval Ile102–Cys193 is coil 1B. Residues Arg194 to Leu216 form a linker 12 region. The segment at Leu217–Gly354 is coil 2. Residues Glu355–Asn411 are tail. The segment at Ala356–Arg387 is disordered. Residues Ser365 to Asp378 are compositionally biased toward polar residues.

It belongs to the intermediate filament family. Heterotetramer of two type I and two type II keratins. Keratin-3 associates with keratin-12. Cornea specific. Associated mainly with all layers of the central corneal epithelium and also found in the suprabasal limbal epithelium.

Involved in corneal epithelium organization, integrity and corneal keratin expression. This Oryctolagus cuniculus (Rabbit) protein is Keratin, type I cytoskeletal 12 (KRT12).